A 233-amino-acid chain; its full sequence is Protein-L-isoaspartate O-methyltransferase (233 aa).

The active site involves S83.

The protein belongs to the methyltransferase superfamily. L-isoaspartyl/D-aspartyl protein methyltransferase family.

The protein localises to the cytoplasm. The enzyme catalyses [protein]-L-isoaspartate + S-adenosyl-L-methionine = [protein]-L-isoaspartate alpha-methyl ester + S-adenosyl-L-homocysteine. Functionally, catalyzes the methyl esterification of L-isoaspartyl residues in peptides and proteins that result from spontaneous decomposition of normal L-aspartyl and L-asparaginyl residues. It plays a role in the repair and/or degradation of damaged proteins. The sequence is that of Protein-L-isoaspartate O-methyltransferase from Opitutus terrae (strain DSM 11246 / JCM 15787 / PB90-1).